Consider the following 216-residue polypeptide: Endoplasmic reticulum vesicle protein 25 (216 aa).

An N-terminal signal peptide occupies residues 1–25 (MGSSRLAMRSALGLFFLLFVQISLA). The Lumenal segment spans residues 26 to 185 (LKFDIAAGKG…TNESTNERVK (160 aa)). Residues 36 to 126 (ERCIRNFVLK…HRSIELDVDI (91 aa)) enclose the GOLD domain. The helical transmembrane segment at 186-206 (WFAFGTMGMLVGLGVWQVIYL) threads the bilayer. The Cytoplasmic segment spans residues 207–216 (RAYFRSKHLI).

This sequence belongs to the EMP24/GP25L family.

It localises to the endoplasmic reticulum membrane. Its subcellular location is the golgi apparatus membrane. Functionally, constituent of COPII-coated endoplasmic reticulum-derived transport vesicles. Required for efficient transport of a subset of secretory proteins to the Golgi. Facilitates retrograde transport from the Golgi to the endoplasmic reticulum. The chain is Endoplasmic reticulum vesicle protein 25 (erv25) from Emericella nidulans (strain FGSC A4 / ATCC 38163 / CBS 112.46 / NRRL 194 / M139) (Aspergillus nidulans).